The primary structure comprises 405 residues: Exodeoxyribonuclease 7 large subunit (405 aa).

It belongs to the XseA family. Heterooligomer composed of large and small subunits.

The protein localises to the cytoplasm. It catalyses the reaction Exonucleolytic cleavage in either 5'- to 3'- or 3'- to 5'-direction to yield nucleoside 5'-phosphates.. In terms of biological role, bidirectionally degrades single-stranded DNA into large acid-insoluble oligonucleotides, which are then degraded further into small acid-soluble oligonucleotides. This Syntrophomonas wolfei subsp. wolfei (strain DSM 2245B / Goettingen) protein is Exodeoxyribonuclease 7 large subunit.